We begin with the raw amino-acid sequence, 233 residues long: Large ribosomal subunit protein uL1 (233 aa).

This sequence belongs to the universal ribosomal protein uL1 family. In terms of assembly, part of the 50S ribosomal subunit.

Binds directly to 23S rRNA. The L1 stalk is quite mobile in the ribosome, and is involved in E site tRNA release. Its function is as follows. Protein L1 is also a translational repressor protein, it controls the translation of the L11 operon by binding to its mRNA. The chain is Large ribosomal subunit protein uL1 from Rhizobium johnstonii (strain DSM 114642 / LMG 32736 / 3841) (Rhizobium leguminosarum bv. viciae).